Consider the following 257-residue polypeptide: 3-methyl-2-oxobutanoate hydroxymethyltransferase (257 aa).

Mg(2+) contacts are provided by D42 and D86. 3-methyl-2-oxobutanoate contacts are provided by residues 42-43 (DS), D86, and K116. E118 is a binding site for Mg(2+). E185 acts as the Proton acceptor in catalysis.

This sequence belongs to the PanB family. In terms of assembly, homodecamer; pentamer of dimers. It depends on Mg(2+) as a cofactor.

It is found in the cytoplasm. It catalyses the reaction 3-methyl-2-oxobutanoate + (6R)-5,10-methylene-5,6,7,8-tetrahydrofolate + H2O = 2-dehydropantoate + (6S)-5,6,7,8-tetrahydrofolate. It functions in the pathway cofactor biosynthesis; (R)-pantothenate biosynthesis; (R)-pantoate from 3-methyl-2-oxobutanoate: step 1/2. Catalyzes the reversible reaction in which hydroxymethyl group from 5,10-methylenetetrahydrofolate is transferred onto alpha-ketoisovalerate to form ketopantoate. This chain is 3-methyl-2-oxobutanoate hydroxymethyltransferase, found in Prochlorococcus marinus subsp. pastoris (strain CCMP1986 / NIES-2087 / MED4).